The chain runs to 594 residues: SHC-transforming protein 3 (594 aa).

The segment at 98–147 (GSCSAPSLAAPDGSAPSAPRAPAMSAARKGRPGDEPLPRPPRGAPHASDQ) is disordered. Residues 101-124 (SAPSLAAPDGSAPSAPRAPAMSAA) show a composition bias toward low complexity. The region spanning 149–334 (LGPGVTYVVK…LDEPWTEEEG (186 aa)) is the PID domain. Residues 335–498 (DGSDHPYYNS…KMLEELQAET (164 aa)) are CH1. Disordered stretches follow at residues 351 to 373 (PPGGFLDTRLKPRPHAPDTAQFA) and 386 to 405 (GDTFGEDWQQTPLRQGSSDI). The span at 393-405 (WQQTPLRQGSSDI) shows a compositional bias: polar residues. Phosphoserine is present on S402. Positions 499–590 (WYQGEMSRKE…GSELCLQQPV (92 aa)) constitute an SH2 domain.

As to quaternary structure, interacts with the Trk receptors in a phosphotyrosine-dependent manner. Once activated, binds to GRB2. Interacts with activated EGF receptors. In terms of processing, tyrosine phosphorylated. Mainly expressed in brain. Hardly detectable in other tissues, except in pancreas. Highly expressed in the cerebral cortex, frontal and temporal lobes, occipital pole, hippocampus, caudate nucleus and amygdala. Expressed at low level in the cerebellum, medulla and spinal cord.

Signaling adapter that couples activated growth factor receptors to signaling pathway in neurons. Involved in the signal transduction pathways of neurotrophin-activated Trk receptors in cortical neurons. This chain is SHC-transforming protein 3 (SHC3), found in Homo sapiens (Human).